The primary structure comprises 144 residues: Large ribosomal subunit protein uL15 (144 aa).

A compositionally biased stretch (basic residues) spans 1–13 (MVRERTKKLRGGH). Residues 1–32 (MVRERTKKLRGGHYGRGFKAGRGKGKKGGSGN) are disordered.

This sequence belongs to the universal ribosomal protein uL15 family. Part of the 50S ribosomal subunit.

Functionally, binds to the 23S rRNA. The sequence is that of Large ribosomal subunit protein uL15 from Thermoplasma acidophilum (strain ATCC 25905 / DSM 1728 / JCM 9062 / NBRC 15155 / AMRC-C165).